We begin with the raw amino-acid sequence, 576 residues long: 3-hydroxy-3-methylglutaryl coenzyme A reductase 1 (576 aa).

A disordered region spans residues 1–35 (MDSRRRPSKPLLTSSGEVLHRKQASPVTDEDQIHR). A run of 2 helical transmembrane segments spans residues 42-62 (ALPL…FSVA) and 89-109 (AIVS…IDFV). Glutamate 255 functions as the Charge relay system in the catalytic mechanism. A glycan (N-linked (GlcNAc...) asparagine) is linked at asparagine 319. Active-site charge relay system residues include lysine 387 and aspartate 463. The chain crosses the membrane as a helical span at residues 532 to 552 (LLATIVAGSVLAGELSLMSAI). The Proton donor role is filled by histidine 561. The N-linked (GlcNAc...) asparagine glycan is linked to asparagine 565.

Belongs to the HMG-CoA reductase family. Expressed in trichomes, leaves, flowers, roots and stems.

Its subcellular location is the endoplasmic reticulum membrane. It localises to the plastid. The protein resides in the chloroplast membrane. It is found in the peroxisome membrane. The catalysed reaction is (R)-mevalonate + 2 NADP(+) + CoA = (3S)-3-hydroxy-3-methylglutaryl-CoA + 2 NADPH + 2 H(+). It functions in the pathway metabolic intermediate biosynthesis; (R)-mevalonate biosynthesis; (R)-mevalonate from acetyl-CoA: step 3/3. Its function is as follows. Catalyzes the synthesis of mevalonate, the specific precursor of all isoprenoid compounds present in plants. Component of the triterpene saponins (e.g. ginsenosides or panaxosides) and phytosterols biosynthetic pathways. Promotes triterpenes accumulation in roots. The polypeptide is 3-hydroxy-3-methylglutaryl coenzyme A reductase 1 (Cannabis sativa (Hemp)).